The primary structure comprises 270 residues: Glutamate racemase (270 aa).

Substrate-binding positions include 7–8 (DS) and 39–40 (YG). The Proton donor/acceptor role is filled by C70. 71 to 72 (NT) provides a ligand contact to substrate. C194 serves as the catalytic Proton donor/acceptor. A substrate-binding site is contributed by 195–196 (TH).

This sequence belongs to the aspartate/glutamate racemases family.

It catalyses the reaction L-glutamate = D-glutamate. It functions in the pathway cell wall biogenesis; peptidoglycan biosynthesis. Provides the (R)-glutamate required for cell wall biosynthesis. This chain is Glutamate racemase, found in Cereibacter sphaeroides (strain ATCC 17025 / ATH 2.4.3) (Rhodobacter sphaeroides).